Here is a 218-residue protein sequence, read N- to C-terminus: Glutathione S-transferase class-mu 26 kDa isozyme (218 aa).

The region spanning Met-1–Gly-83 is the GST N-terminal domain. Glutathione contacts are provided by residues Tyr-7 to Trp-8, Trp-41 to Lys-45, Asn-54 to Leu-55, and Gln-67 to Ser-68. In terms of domain architecture, GST C-terminal spans Cys-85–Leu-203. Residue Tyr-111 participates in substrate binding.

It belongs to the GST superfamily. Mu family. In terms of assembly, homodimer. As to expression, tegument and in subtegumentary parenchymal cells. GST 26 may be actively excreted by adult worms.

It catalyses the reaction RX + glutathione = an S-substituted glutathione + a halide anion + H(+). Its function is as follows. Conjugation of reduced glutathione to a wide number of exogenous and endogenous hydrophobic electrophiles. In terms of biological role, GST isoenzymes appear to play a central role in the parasite detoxification system. Other functions are also suspected including a role in increasing the solubility of haematin in the parasite gut. In Schistosoma mansoni (Blood fluke), this protein is Glutathione S-transferase class-mu 26 kDa isozyme.